We begin with the raw amino-acid sequence, 212 residues long: Large ribosomal subunit protein uL3 (212 aa).

Glutamine 153 is modified (N5-methylglutamine).

The protein belongs to the universal ribosomal protein uL3 family. As to quaternary structure, part of the 50S ribosomal subunit. Forms a cluster with proteins L14 and L19. Methylated by PrmB.

One of the primary rRNA binding proteins, it binds directly near the 3'-end of the 23S rRNA, where it nucleates assembly of the 50S subunit. The polypeptide is Large ribosomal subunit protein uL3 (Shewanella woodyi (strain ATCC 51908 / MS32)).